The sequence spans 379 residues: Queuine tRNA-ribosyltransferase (379 aa).

Asp-94 acts as the Proton acceptor in catalysis. Substrate is bound by residues 94–98 (DSGGF), Asp-148, Gln-191, and Gly-218. Residues 249–255 (GVGSPDS) form an RNA binding region. Asp-268 serves as the catalytic Nucleophile. Residues 273 to 277 (TRIAR) form an RNA binding; important for wobble base 34 recognition region. Zn(2+) is bound by residues Cys-306, Cys-308, Cys-311, and His-337.

This sequence belongs to the queuine tRNA-ribosyltransferase family. As to quaternary structure, homodimer. Within each dimer, one monomer is responsible for RNA recognition and catalysis, while the other monomer binds to the replacement base PreQ1. Zn(2+) serves as cofactor.

The enzyme catalyses 7-aminomethyl-7-carbaguanine + guanosine(34) in tRNA = 7-aminomethyl-7-carbaguanosine(34) in tRNA + guanine. It functions in the pathway tRNA modification; tRNA-queuosine biosynthesis. In terms of biological role, catalyzes the base-exchange of a guanine (G) residue with the queuine precursor 7-aminomethyl-7-deazaguanine (PreQ1) at position 34 (anticodon wobble position) in tRNAs with GU(N) anticodons (tRNA-Asp, -Asn, -His and -Tyr). Catalysis occurs through a double-displacement mechanism. The nucleophile active site attacks the C1' of nucleotide 34 to detach the guanine base from the RNA, forming a covalent enzyme-RNA intermediate. The proton acceptor active site deprotonates the incoming PreQ1, allowing a nucleophilic attack on the C1' of the ribose to form the product. After dissociation, two additional enzymatic reactions on the tRNA convert PreQ1 to queuine (Q), resulting in the hypermodified nucleoside queuosine (7-(((4,5-cis-dihydroxy-2-cyclopenten-1-yl)amino)methyl)-7-deazaguanosine). This is Queuine tRNA-ribosyltransferase from Halalkalibacterium halodurans (strain ATCC BAA-125 / DSM 18197 / FERM 7344 / JCM 9153 / C-125) (Bacillus halodurans).